Here is a 387-residue protein sequence, read N- to C-terminus: Succinate--CoA ligase [ADP-forming] subunit beta (387 aa).

The region spanning 9–245 (KDLLESYGLK…KSQENAKELK (237 aa)) is the ATP-grasp domain. ATP-binding positions include K46, 53–55 (GRG), E100, Y103, and E108. The Mg(2+) site is built by N200 and D214. Residues N265 and 322 to 324 (GIV) contribute to the substrate site.

The protein belongs to the succinate/malate CoA ligase beta subunit family. Heterotetramer of two alpha and two beta subunits. Mg(2+) serves as cofactor.

It carries out the reaction succinate + ATP + CoA = succinyl-CoA + ADP + phosphate. It catalyses the reaction GTP + succinate + CoA = succinyl-CoA + GDP + phosphate. The protein operates within carbohydrate metabolism; tricarboxylic acid cycle; succinate from succinyl-CoA (ligase route): step 1/1. Functionally, succinyl-CoA synthetase functions in the citric acid cycle (TCA), coupling the hydrolysis of succinyl-CoA to the synthesis of either ATP or GTP and thus represents the only step of substrate-level phosphorylation in the TCA. The beta subunit provides nucleotide specificity of the enzyme and binds the substrate succinate, while the binding sites for coenzyme A and phosphate are found in the alpha subunit. This Francisella tularensis subsp. tularensis (strain FSC 198) protein is Succinate--CoA ligase [ADP-forming] subunit beta.